The following is an 85-amino-acid chain: Large ribosomal subunit protein bL27 (85 aa).

Residues 1–20 (MAHKKGGGTTRNGRDSESKR) form a disordered region.

The protein belongs to the bacterial ribosomal protein bL27 family.

The polypeptide is Large ribosomal subunit protein bL27 (Herminiimonas arsenicoxydans).